The primary structure comprises 809 residues: MGVGRARLYFQYFKAKFLKRRVTPPVDYEEIVSEFWRADFSSTEHARWHAEAGDGYETARGAHGLTLHLRRKFLYAWSANPVFRYKDCVLTARIRFLPGTHPPGEARALPNSEQPEVPASLDSTSRPACLPEAVAVDPSAMGEAVPERAGTCAAGLLFRYLNESTFYALLVSDGGWLRLDAVVNNTPLPLLGWTDTGASDEVRVLSLIAVGTSFTLCVDDQWIAQIEDDTIQAAGKVCFAAQNWGVHAHRSFELSAFSLESQPFMVETACLRANEPARIPASAHLRLAESLYAMGRAACARAEMKKLKAKCTFGLREYLLAGDIACAQHLYDEAEEAFNAALVQDPHCMRALLALGGALYQQNAYEKLAHLLATHRVVAERDAFLSNLCGHLALAQNRHEDAAAAYQRAFRLDPHQGLFALHAAQELSLLGEKEQAIQAYLHAARLFLAQESYADLERVVLALRRLDPERTEVRSIAGKLYYATGRHRQAHTQFDALCRAGSADATVWYLYGLLLREAQGTHEHDAPAAAACEQRARDAFQRACALAPDCALYHFKYAESLFLSEKDCDEPLARALALDPDNGWLHNLCAQKALREQNFDAAAQSLQRARALLPHELVVLENYIELQRQRGALACCVPLFEVETQRADAAVIAQRGQAFHLLANAFYADGCYEHAAPWYDKALREEPQNVQMLVHKAENSIKLHLLHEADALLVKALDIQLTAHVYTLIALVAAQLGDFPRAELTLQEACTLWPQCTEVRIELIHLYLTMQDRQQAATQWNILVQKEDSDRVRALHALIFEEKPPAPQE.

The segment at 103–125 (PGEARALPNSEQPEVPASLDSTS) is disordered. 9 TPR repeats span residues 315-348 (LREYLLAGDIACAQHLYDEAEEAFNAALVQDPHC), 383-416 (AFLSNLCGHLALAQNRHEDAAAAYQRAFRLDPHQ), 418-450 (LFALHAAQELSLLGEKEQAIQAYLHAARLFLAQ), 471-504 (TEVRSIAGKLYYATGRHRQAHTQFDALCRAGSAD), 513-550 (LLLREAQGTHEHDAPAAAACEQRARDAFQRACALAPDC), 552-582 (LYHFKYAESLFLSEKDCDEPLARALALDPDN), 583-616 (GWLHNLCAQKALREQNFDAAAQSLQRARALLPHE), 656-689 (GQAFHLLANAFYADGCYEHAAPWYDKALREEPQN), and 723-756 (AHVYTLIALVAAQLGDFPRAELTLQEACTLWPQC).

The sequence is that of TPR repeat-containing protein TP_0920 from Treponema pallidum (strain Nichols).